The sequence spans 602 residues: Lysine--tRNA ligase, chloroplastic/mitochondrial (602 aa).

Positions 50–62 (SSSSSSATTAETS) are enriched in low complexity. The segment at 50 to 83 (SSSSSSATTAETSKPSGRNRRSASSSNSTSDREA) is disordered. A DNA-binding region (OB) is located at residues 136–214 (VSIAGRVVAR…SICVNSFSIL (79 aa)). The substrate site is built by Gly285 and Glu309. Residues 331–333 (RNE) and 339–340 (HN) contribute to the ATP site. Substrate contacts are provided by Glu347 and Tyr349. 2 residues coordinate Ca(2+): Glu492 and Glu499. 499–500 (EM) contacts ATP. The substrate site is built by Asn502 and Glu506. Basic and acidic residues predominate over residues 524–543 (HNAKRAEAVRESPEPNAKKD). The disordered stretch occupies residues 524-550 (HNAKRAEAVRESPEPNAKKDDDDDESY). ATP is bound at residue 575 to 578 (GIDR).

Belongs to the class-II aminoacyl-tRNA synthetase family. Ca(2+) serves as cofactor.

It is found in the plastid. It localises to the chloroplast. Its subcellular location is the mitochondrion. It catalyses the reaction tRNA(Lys) + L-lysine + ATP = L-lysyl-tRNA(Lys) + AMP + diphosphate. Catalyzes the specific attachment of an amino acid to its cognate tRNA in a 2 step reaction: the amino acid (AA) is first activated by ATP to form AA-AMP and then transferred to the acceptor end of the tRNA. In Arabidopsis thaliana (Mouse-ear cress), this protein is Lysine--tRNA ligase, chloroplastic/mitochondrial.